The following is a 471-amino-acid chain: 1,3-beta-glucanosyltransferase GAS4 (471 aa).

The first 21 residues, 1-21 (MMVFSSTFIFLILELVVLCEA), serve as a signal peptide directing secretion. The cysteines at positions 70 and 99 are disulfide-linked. Tyr88 is a (1,3-beta-D-glucosyl)n binding site. Asn151 carries N-linked (GlcNAc...) asparagine glycosylation. (1,3-beta-D-glucosyl)n is bound by residues Asn160, Glu161, Asp203, and Arg208. Catalysis depends on Glu161, which acts as the Proton donor. Cystine bridges form between Cys217–Cys354 and Cys238–Cys269. The active-site Nucleophile is the Glu266. A (1,3-beta-D-glucosyl)n-binding site is contributed by Tyr298. Residue Asn398 is glycosylated (N-linked (GlcNAc...) asparagine). Asn447 carries the GPI-anchor amidated asparagine lipid modification. A propeptide spans 448 to 471 (SASISGPLLPLGLCLLFFTFSLFF) (removed in mature form).

Belongs to the glycosyl hydrolase 72 family.

Its subcellular location is the cell membrane. Functionally, splits internally a 1,3-beta-glucan molecule and transfers the newly generated reducing end (the donor) to the non-reducing end of another 1,3-beta-glucan molecule (the acceptor) forming a 1,3-beta linkage, resulting in the elongation of 1,3-beta-glucan chains in the cell wall. Involved in spore wall assembly. This chain is 1,3-beta-glucanosyltransferase GAS4 (GAS4), found in Saccharomyces cerevisiae (strain ATCC 204508 / S288c) (Baker's yeast).